We begin with the raw amino-acid sequence, 127 residues long: Fluoride-specific ion channel FluC (127 aa).

The next 4 helical transmembrane spans lie at 7 to 27, 37 to 57, 69 to 89, and 102 to 122; these read LILI…MGLI, FGTL…MAMI, LFMI…SAEV, and LGIM…GVLI. Gly-77 and Thr-80 together coordinate Na(+).

The protein belongs to the fluoride channel Fluc/FEX (TC 1.A.43) family.

It is found in the cell inner membrane. The catalysed reaction is fluoride(in) = fluoride(out). Its activity is regulated as follows. Na(+) is not transported, but it plays an essential structural role and its presence is essential for fluoride channel function. Its function is as follows. Fluoride-specific ion channel. Important for reducing fluoride concentration in the cell, thus reducing its toxicity. This Mannheimia succiniciproducens (strain KCTC 0769BP / MBEL55E) protein is Fluoride-specific ion channel FluC.